The sequence spans 207 residues: Probable nicotinate-nucleotide adenylyltransferase (207 aa).

This sequence belongs to the NadD family.

It catalyses the reaction nicotinate beta-D-ribonucleotide + ATP + H(+) = deamido-NAD(+) + diphosphate. Its pathway is cofactor biosynthesis; NAD(+) biosynthesis; deamido-NAD(+) from nicotinate D-ribonucleotide: step 1/1. Catalyzes the reversible adenylation of nicotinate mononucleotide (NaMN) to nicotinic acid adenine dinucleotide (NaAD). The sequence is that of Probable nicotinate-nucleotide adenylyltransferase from Desulfitobacterium hafniense (strain Y51).